A 262-amino-acid chain; its full sequence is Aconitate isomerase (262 aa).

The first 22 residues, 1–22, serve as a signal peptide directing secretion; that stretch reads MFPRLPTLALGALLLASTPLLA.

Monomer.

It catalyses the reaction trans-aconitate = cis-aconitate. Activated more than 1.5 fold by Ca(2+), Mg(2+), Mn(2+), Ni(2+), Fe(2+), DDT and 1,10-phenanthroline. Strongly inhibited by Ag(+) and Hg(+). Inhibited by addition of 20% (v/v) glycerol. No effect by addition of NADH or NADPH. In terms of biological role, involved in assimilation of trans-aconitic acid. Preference for cis-aconitic acid is 14-fold higher than for trans-aconitic acid. Not active on intermediates of tricarboxylic acid (TCA) cycle including citric acid, succinic acid, fumaric acid, and 2-oxoglutaric acid or on other dicarboxilic acids including itaconic acid, formic acid, citraconic acid or maleic acid. The sequence is that of Aconitate isomerase from Pseudomonas sp.